We begin with the raw amino-acid sequence, 57 residues long: Dendroaspis polylepis MT9 (57 aa).

Intrachain disulfides connect Cys-3/Cys-22, Cys-17/Cys-36, Cys-38/Cys-49, and Cys-50/Cys-55.

This sequence belongs to the three-finger toxin family. Short-chain subfamily. In terms of tissue distribution, expressed by the venom gland.

Its subcellular location is the secreted. Functionally, when tested on muscarinic GPCR, specifically antagonizes the type 2 receptor (CHRM2) subtype (Ki/Kd=120-399 nM). Ex vivo, it reverses the M2R-agonist-induced relaxation in rat and human arteries. The sequence is that of Dendroaspis polylepis MT9 from Dendroaspis polylepis polylepis (Black mamba).